The chain runs to 234 residues: Peptidyl-prolyl cis-trans isomerase FKBP17-3, chloroplastic (234 aa).

The transit peptide at 1-28 (MATLFTATVPSHHRFVSPSQHPKQSLLS) directs the protein to the chloroplast. The PPIase FKBP-type domain maps to 130-228 (GYLVVFDVKG…DYIIEVDTVY (99 aa)).

It belongs to the FKBP-type PPIase family.

The protein resides in the plastid. It localises to the chloroplast thylakoid lumen. It carries out the reaction [protein]-peptidylproline (omega=180) = [protein]-peptidylproline (omega=0). In terms of biological role, PPIases accelerate the folding of proteins. It catalyzes the cis-trans isomerization of proline imidic peptide bonds in oligopeptides. This is Peptidyl-prolyl cis-trans isomerase FKBP17-3, chloroplastic (FKBP17-3) from Arabidopsis thaliana (Mouse-ear cress).